The sequence spans 603 residues: uncharacterized protein (603 aa).

The 93-residue stretch at 1–93 folds into the PE domain; sequence MSFVIAAPET…AGAYASAEAA (93 aa). The disordered stretch occupies residues 309–333; that stretch reads GIFTGNGGTGGTGGTGTGNQLVGGE.

Belongs to the mycobacterial PE family. PGRS subfamily.

This is an uncharacterized protein from Mycobacterium tuberculosis (strain CDC 1551 / Oshkosh).